The primary structure comprises 379 residues: Homoserine O-succinyltransferase (379 aa).

The region spanning 51 to 360 (NAVLICHALS…DSPYGHDAFL (310 aa)) is the AB hydrolase-1 domain. The active-site Nucleophile is the S157. Residue R227 participates in substrate binding. Active-site residues include D323 and H356. D357 contacts substrate.

The protein belongs to the AB hydrolase superfamily. MetX family. Homodimer.

The protein resides in the cytoplasm. It carries out the reaction L-homoserine + succinyl-CoA = O-succinyl-L-homoserine + CoA. It participates in amino-acid biosynthesis; L-methionine biosynthesis via de novo pathway; O-succinyl-L-homoserine from L-homoserine: step 1/1. Its function is as follows. Transfers a succinyl group from succinyl-CoA to L-homoserine, forming succinyl-L-homoserine. The protein is Homoserine O-succinyltransferase of Pseudomonas entomophila (strain L48).